The sequence spans 171 residues: Endoribonuclease YbeY (171 aa).

Positions 115, 119, and 125 each coordinate Zn(2+).

Belongs to the endoribonuclease YbeY family. Zn(2+) is required as a cofactor.

The protein resides in the cytoplasm. Its function is as follows. Single strand-specific metallo-endoribonuclease involved in late-stage 70S ribosome quality control and in maturation of the 3' terminus of the 16S rRNA. This chain is Endoribonuclease YbeY, found in Tropheryma whipplei (strain TW08/27) (Whipple's bacillus).